A 214-amino-acid chain; its full sequence is Acyl-homoserine-lactone synthase (214 aa).

It belongs to the autoinducer synthase family.

The enzyme catalyses a fatty acyl-[ACP] + S-adenosyl-L-methionine = an N-acyl-L-homoserine lactone + S-methyl-5'-thioadenosine + holo-[ACP] + H(+). In terms of biological role, required for the synthesis of autoinducer molecules such as OHHL (N-(3-oxohexanoyl)-L-homoserine lactone), and HHL (N-hexanoyl-L-homoserine lactone). The polypeptide is Acyl-homoserine-lactone synthase (yenI) (Yersinia enterocolitica).